Consider the following 59-residue polypeptide: Large ribosomal subunit protein uL30 (59 aa).

It belongs to the universal ribosomal protein uL30 family. In terms of assembly, part of the 50S ribosomal subunit.

The sequence is that of Large ribosomal subunit protein uL30 from Bacillus subtilis (strain 168).